Here is a 146-residue protein sequence, read N- to C-terminus: Large ribosomal subunit protein uL15 (146 aa).

Basic and acidic residues predominate over residues 1–18; that stretch reads MKLHELKPAEGSRKERNR. The interval 1 to 54 is disordered; it reads MKLHELKPAEGSRKERNRVGRGVATGNGKTSGRGHKGQKARSGGGVRPGFEGGQ. Gly residues predominate over residues 42–52; sequence SGGGVRPGFEG.

It belongs to the universal ribosomal protein uL15 family. As to quaternary structure, part of the 50S ribosomal subunit.

Functionally, binds to the 23S rRNA. The sequence is that of Large ribosomal subunit protein uL15 from Staphylococcus aureus (strain Mu3 / ATCC 700698).